Reading from the N-terminus, the 249-residue chain is Selenoprotein BthD (249 aa).

A disordered region spans residues 1–22; the sequence is MPPKRNKKAEAPIAERDAGEEL. The segment covering 8 to 19 has biased composition (basic and acidic residues); sequence KAEAPIAERDAG. Positions 34 to 37 form a cross-link, cysteinyl-selenocysteine (Cys-Sec); redox-active; the sequence is CRSU. Sec-37 is a non-standard amino acid (selenocysteine). The interval 122 to 249 is disordered; that stretch reads QQESKEQTNT…EATAGAKRRR (128 aa). Ser-147 bears the Phosphoserine mark. Residues 175–198 show a composition bias toward basic and acidic residues; the sequence is EQKSEEEPTQVDSKEAKQSKELVK. The span at 199-210 shows a compositional bias: basic residues; the sequence is TKRQPKAQKKQA.

In terms of tissue distribution, expressed in the developing salivary gland at late stages of embryogenesis. Also expressed in brain, neuroblast and wing disk.

The protein localises to the cytoplasm. It localises to the secreted. In terms of biological role, may be involved in a redox-related process. Required for survival and specifically for salivary gland morphogenesis. This Drosophila melanogaster (Fruit fly) protein is Selenoprotein BthD (BthD).